A 253-amino-acid polypeptide reads, in one-letter code: CD151 antigen (253 aa).

At 1–18 (MGEFNEKKATCGTVCLKY) the chain is on the cytoplasmic side. Residues Cys11 and Cys15 are each lipidated (S-palmitoyl cysteine). A helical membrane pass occupies residues 19–39 (LLFTYNCCFWLAGLAVMAVGI). The Extracellular segment spans residues 40–57 (WTLALKSDYISLLASSTY). The chain crosses the membrane as a helical span at residues 58 to 78 (LATAYILVVAGVVVMVTGVLG). Topologically, residues 79–91 (CCATFKERRNLLR) are cytoplasmic. The chain crosses the membrane as a helical span at residues 92-112 (LYFILLLIIFLLEIIAGILAY). At 113–221 (VYYQQLNTEL…LETFIQEHLR (109 aa)) the chain is on the extracellular side. Asn159 carries an N-linked (GlcNAc...) asparagine glycan. A helical transmembrane segment spans residues 222 to 242 (VIGAVGIGIACVQVFGMIFTC). 2 S-palmitoyl cysteine lipidation sites follow: Cys242 and Cys243. The Cytoplasmic segment spans residues 243–253 (CLYRSLKLEHY).

The protein belongs to the tetraspanin (TM4SF) family. As to quaternary structure, interacts with integrins ITGA3:ITGB1, ITGA5:ITGB1, ITGA3:ITGB1 and ITGA6:ITGB4 and with CD9 and CD181. Interacts (via the second extracellular domain) with integrin ITGAV:ITGB3. Interacts with ITGA3; this interaction modulates ITGA3 glycosylation pattern. Interacts with F11R. Interacts with RAC1 and CDC42; these interactions mediate physical association of RAC1 and CDC42 with integrin adhesion receptor complexes. In terms of processing, palmitoylated. Palmitoylation by ZDHHC2 regulates CD151 expression, association with other tetraspanin family proteins and function in cell adhesion. Ubiquitinated by RNF128 on lysine residues present in the tetraspanin amino terminus via 'Lys-48'-linked ubiquitin leading to proteasomal degradation.

It localises to the cell membrane. Structural component of specialized membrane microdomains known as tetraspanin-enriched microdomains (TERMs), which act as platforms for receptor clustering and signaling. Plays a role in various cellular and molecular mechanism through its association with both integrin and non-integrin proteins. These interactions facilitate critical cellular functions, including cell-to-cell communication, wound healing, platelet aggregation, trafficking, cell motility, and angiogenesis. Via interaction with JAM-A/F11R and integrin ITGA3:ITGB1, promotes the recruitment of signaling molecules such as RAC1, CDC42 and RhoGTPases to facilitate the polarization of epithelial cells and the reorganization of the actin cytoskeleton, which are critical steps in cell migration process. Regulates the glycosylation pattern of ITGA3:ITGB1 thereby modulating its activity. Plays an essential role in the maintenance of central laminin-binding integrin ITGA6:ITGB4-containing adhesion complexes. Essential for the proper assembly of the glomerular and tubular basement membranes in kidney. Contributes to T-cell activation by modulating integrin signaling leading to activation of downstream targets PTK2 and MAPK1/MAPK3. This Mus musculus (Mouse) protein is CD151 antigen (Cd151).